Here is a 291-residue protein sequence, read N- to C-terminus: Succinate--CoA ligase [ADP-forming] subunit alpha 1 (291 aa).

Residues 20-23 (TGFQ), Lys46, and 99-101 (VTE) each bind CoA. Residue Tyr162 coordinates substrate. His249 acts as the Tele-phosphohistidine intermediate in catalysis.

This sequence belongs to the succinate/malate CoA ligase alpha subunit family. In terms of assembly, heterotetramer of two alpha and two beta subunits.

It carries out the reaction succinate + ATP + CoA = succinyl-CoA + ADP + phosphate. The catalysed reaction is GTP + succinate + CoA = succinyl-CoA + GDP + phosphate. It functions in the pathway carbohydrate metabolism; tricarboxylic acid cycle; succinate from succinyl-CoA (ligase route): step 1/1. Functionally, succinyl-CoA synthetase functions in the citric acid cycle (TCA), coupling the hydrolysis of succinyl-CoA to the synthesis of either ATP or GTP and thus represents the only step of substrate-level phosphorylation in the TCA. The alpha subunit of the enzyme binds the substrates coenzyme A and phosphate, while succinate binding and nucleotide specificity is provided by the beta subunit. The chain is Succinate--CoA ligase [ADP-forming] subunit alpha 1 from Archaeoglobus fulgidus (strain ATCC 49558 / DSM 4304 / JCM 9628 / NBRC 100126 / VC-16).